The sequence spans 146 residues: uncharacterized protein (146 aa).

The next 4 membrane-spanning stretches (helical) occupy residues 1–21 (MFAN…AASL), 35–55 (AAVY…LFVG), 87–107 (GGAG…GVGH), and 111–131 (AIAA…GGHL).

Its subcellular location is the cell membrane. This is an uncharacterized protein from Mycobacterium tuberculosis (strain CDC 1551 / Oshkosh).